A 468-amino-acid polypeptide reads, in one-letter code: Na(+)/H(+) antiporter NhaA (468 aa).

10 consecutive transmembrane segments (helical) span residues F32–L52, L83–I103, A119–I139, G148–G168, F178–F198, G205–V225, A320–V340, G354–V374, L397–F417, and L428–Y448.

Belongs to the NhaA Na(+)/H(+) (TC 2.A.33) antiporter family.

The protein localises to the cell inner membrane. It catalyses the reaction Na(+)(in) + 2 H(+)(out) = Na(+)(out) + 2 H(+)(in). In terms of biological role, na(+)/H(+) antiporter that extrudes sodium in exchange for external protons. This Cupriavidus necator (strain ATCC 17699 / DSM 428 / KCTC 22496 / NCIMB 10442 / H16 / Stanier 337) (Ralstonia eutropha) protein is Na(+)/H(+) antiporter NhaA.